The chain runs to 267 residues: 4-hydroxy-tetrahydrodipicolinate reductase (267 aa).

11–16 (GAAGRM) is an NAD(+) binding site. Arg39 is an NADP(+) binding site. NAD(+) contacts are provided by residues 100 to 102 (GTT) and 126 to 129 (APNF). Residue His156 is the Proton donor/acceptor of the active site. His157 contacts (S)-2,3,4,5-tetrahydrodipicolinate. The Proton donor role is filled by Lys160. 166–167 (GT) is a (S)-2,3,4,5-tetrahydrodipicolinate binding site.

This sequence belongs to the DapB family.

The protein resides in the cytoplasm. It catalyses the reaction (S)-2,3,4,5-tetrahydrodipicolinate + NAD(+) + H2O = (2S,4S)-4-hydroxy-2,3,4,5-tetrahydrodipicolinate + NADH + H(+). The catalysed reaction is (S)-2,3,4,5-tetrahydrodipicolinate + NADP(+) + H2O = (2S,4S)-4-hydroxy-2,3,4,5-tetrahydrodipicolinate + NADPH + H(+). Its pathway is amino-acid biosynthesis; L-lysine biosynthesis via DAP pathway; (S)-tetrahydrodipicolinate from L-aspartate: step 4/4. Functionally, catalyzes the conversion of 4-hydroxy-tetrahydrodipicolinate (HTPA) to tetrahydrodipicolinate. This is 4-hydroxy-tetrahydrodipicolinate reductase from Moorella thermoacetica (strain ATCC 39073 / JCM 9320).